Consider the following 451-residue polypeptide: Spermidine sinapoyl-CoA acyltransferase (451 aa).

Positions 47, 169, 294, 316, and 378 each coordinate spermidine. Residue histidine 169 is the Proton acceptor of the active site. The active-site Proton acceptor is aspartate 391.

This sequence belongs to the plant acyltransferase family. As to quaternary structure, monomer. As to expression, predominantly expressed in siliques, especially in seeds around the embryo, and, at low levels, in flowers. Barely detectable in stems, leaves, and roots.

It catalyses the reaction 2 (E)-sinapoyl-CoA + spermidine = N(1),N(8)-bis[(E)-sinapoyl]-spermidine + 2 CoA + 2 H(+). It functions in the pathway amine and polyamine metabolism; spermidine metabolism. Functionally, spermidine sinapoyl-CoA acyltransferase that mediates the accumulation of disinapoyl spermidine conjugates in seeds. Catalyzes the two conjugating steps required for the biosynthesis of N1,N8-disipanoyl-spermidine. Can also use putrescine as an acyl acceptor to convert it into monosinapoyl-putrescine. In Arabidopsis thaliana (Mouse-ear cress), this protein is Spermidine sinapoyl-CoA acyltransferase.